The chain runs to 290 residues: Poly-beta-1,6-N-acetyl-D-glucosamine N-deacetylase (290 aa).

The signal sequence occupies residues 1–28 (MKYRKLIILVLSILIILPVSTLDGHHIA). The 177-residue stretch at 114-290 (RSVWINFDDM…KRWDGFHEKD (177 aa)) folds into the NodB homology domain.

It belongs to the polysaccharide deacetylase family.

Its subcellular location is the secreted. The protein resides in the cell wall. Catalyzes the N-deacetylation of poly-beta-1,6-N-acetyl-D-glucosamine (PNAG, also referred to as PIA), a biofilm adhesin polysaccharide. N-deacetylation is crucial for attachment of the polysaccharide to the bacterial cell surface; it leads to the introduction of positive charges in the otherwise neutral PIA polymer, allowing electrostatic interactions. This Staphylococcus aureus (strain Mu50 / ATCC 700699) protein is Poly-beta-1,6-N-acetyl-D-glucosamine N-deacetylase (icaB).